A 438-amino-acid polypeptide reads, in one-letter code: 3-phosphoshikimate 1-carboxyvinyltransferase (438 aa).

Lysine 28, serine 29, and arginine 33 together coordinate 3-phosphoshikimate. Phosphoenolpyruvate is bound at residue lysine 28. Phosphoenolpyruvate contacts are provided by glycine 97 and arginine 125. Positions 168, 169, 170, 316, and 343 each coordinate 3-phosphoshikimate. Glutamine 170 lines the phosphoenolpyruvate pocket. Glutamate 316 serves as the catalytic Proton acceptor. Phosphoenolpyruvate is bound by residues arginine 347, arginine 388, and lysine 413.

Belongs to the EPSP synthase family. As to quaternary structure, monomer.

It localises to the cytoplasm. It catalyses the reaction 3-phosphoshikimate + phosphoenolpyruvate = 5-O-(1-carboxyvinyl)-3-phosphoshikimate + phosphate. It participates in metabolic intermediate biosynthesis; chorismate biosynthesis; chorismate from D-erythrose 4-phosphate and phosphoenolpyruvate: step 6/7. Functionally, catalyzes the transfer of the enolpyruvyl moiety of phosphoenolpyruvate (PEP) to the 5-hydroxyl of shikimate-3-phosphate (S3P) to produce enolpyruvyl shikimate-3-phosphate and inorganic phosphate. This Rhodococcus jostii (strain RHA1) protein is 3-phosphoshikimate 1-carboxyvinyltransferase.